We begin with the raw amino-acid sequence, 931 residues long: Neuropilin-2 (931 aa).

Positions 1 to 20 (MDMFPLTWVFLALYFSGHEV) are cleaved as a signal peptide. Over 21 to 864 (RSQQDPPCGG…EKSWLYTLDP (844 aa)) the chain is Extracellular. Intrachain disulfides connect Cys28–Cys55, Cys83–Cys105, and Cys149–Cys175. CUB domains are found at residues 28–142 (CGGR…YEIF) and 149–267 (CSKN…YYLI). 2 N-linked (GlcNAc...) asparagine glycosylation sites follow: Asn152 and Asn157. Positions 197, 211, and 252 each coordinate Ca(2+). An intrachain disulfide couples Cys208 to Cys230. Intrachain disulfides connect Cys277–Cys427 and Cys434–Cys592. F5/8 type C domains lie at 277–427 (CNVP…LFGC) and 434–592 (CSNM…VLGC). Residues 298–310 (TFSDGRWTPQQSR) are compositionally biased toward polar residues. Residues 298–317 (TFSDGRWTPQQSRLHGDDNG) form a disordered region. A disordered region spans residues 601–621 (VETLGPTVKSEETTTPYPMDE). Residue Asn629 is glycosylated (N-linked (GlcNAc...) asparagine). An MAM domain is found at 642–802 (SGFNCNFDFP…TDVPLENCME (161 aa)). The interval 819–854 (THGGEGYEDEIDDEYEGDWSNSSSSTSGAGDPSSGK) is disordered. The span at 824–835 (GYEDEIDDEYEG) shows a compositional bias: acidic residues. A compositionally biased stretch (low complexity) spans 836 to 851 (DWSNSSSSTSGAGDPS). Asn839 is a glycosylation site (N-linked (GlcNAc...) asparagine). Residues 865-889 (ILITIIAMSSLGVLLGATCAGLLLY) traverse the membrane as a helical segment. Topologically, residues 890–931 (CTCSYSGLSSRSCTTLENYNFELYDGLKHKVKINHQKCCSEA) are cytoplasmic.

The protein belongs to the neuropilin family. In terms of assembly, heterodimer with NRP1. Binds PLXNB1. In terms of tissue distribution, expressed in developing CNS, PNS and in some nonneural tissues including limb buds, developing bones, muscles, intestinal epithelium, kidney, lung and submandibular gland.

The protein resides in the membrane. Functionally, high affinity receptor for semaphorins 3C, 3F, VEGF-165 and VEGF-145 isoforms of VEGF, and the PLGF-2 isoform of PGF. This Mus musculus (Mouse) protein is Neuropilin-2 (Nrp2).